We begin with the raw amino-acid sequence, 211 residues long: Uracil phosphoribosyltransferase (211 aa).

5-phospho-alpha-D-ribose 1-diphosphate-binding positions include R78, R103, and 130–138; that span reads DPMLATGGT. Residues I196 and 201–203 each bind uracil; that span reads GDA. D202 contacts 5-phospho-alpha-D-ribose 1-diphosphate.

This sequence belongs to the UPRTase family. Mg(2+) is required as a cofactor.

It carries out the reaction UMP + diphosphate = 5-phospho-alpha-D-ribose 1-diphosphate + uracil. Its pathway is pyrimidine metabolism; UMP biosynthesis via salvage pathway; UMP from uracil: step 1/1. Allosterically activated by GTP. Catalyzes the conversion of uracil and 5-phospho-alpha-D-ribose 1-diphosphate (PRPP) to UMP and diphosphate. This is Uracil phosphoribosyltransferase from Beutenbergia cavernae (strain ATCC BAA-8 / DSM 12333 / CCUG 43141 / JCM 11478 / NBRC 16432 / NCIMB 13614 / HKI 0122).